The sequence spans 550 residues: Chaperonin GroEL (550 aa).

ATP contacts are provided by residues threonine 30 to proline 33, lysine 51, aspartate 87 to threonine 91, glycine 415, asparagine 479 to alanine 481, and aspartate 495. Residues proline 525 to methionine 550 form a disordered region. Residues asparagine 540–methionine 550 are compositionally biased toward gly residues.

Belongs to the chaperonin (HSP60) family. Forms a cylinder of 14 subunits composed of two heptameric rings stacked back-to-back. Interacts with the co-chaperonin GroES.

It is found in the cytoplasm. It carries out the reaction ATP + H2O + a folded polypeptide = ADP + phosphate + an unfolded polypeptide.. Its function is as follows. Together with its co-chaperonin GroES, plays an essential role in assisting protein folding. The GroEL-GroES system forms a nano-cage that allows encapsulation of the non-native substrate proteins and provides a physical environment optimized to promote and accelerate protein folding. In Buchnera aphidicola subsp. Cinara cedri (strain Cc), this protein is Chaperonin GroEL.